Reading from the N-terminus, the 434-residue chain is V-type ATP synthase beta chain (434 aa).

The protein belongs to the ATPase alpha/beta chains family.

Produces ATP from ADP in the presence of a proton gradient across the membrane. The V-type beta chain is a regulatory subunit. The chain is V-type ATP synthase beta chain from Borreliella afzelii (strain PKo) (Borrelia afzelii).